A 179-amino-acid chain; its full sequence is Large ribosomal subunit protein uL5 (179 aa).

It belongs to the universal ribosomal protein uL5 family. As to quaternary structure, part of the 50S ribosomal subunit; part of the 5S rRNA/L5/L18/L25 subcomplex. Contacts the 5S rRNA and the P site tRNA. Forms a bridge to the 30S subunit in the 70S ribosome.

Functionally, this is one of the proteins that bind and probably mediate the attachment of the 5S RNA into the large ribosomal subunit, where it forms part of the central protuberance. In the 70S ribosome it contacts protein S13 of the 30S subunit (bridge B1b), connecting the 2 subunits; this bridge is implicated in subunit movement. Contacts the P site tRNA; the 5S rRNA and some of its associated proteins might help stabilize positioning of ribosome-bound tRNAs. The sequence is that of Large ribosomal subunit protein uL5 from Ruthia magnifica subsp. Calyptogena magnifica.